A 250-amino-acid polypeptide reads, in one-letter code: L-ascorbate peroxidase, cytosolic (250 aa).

Residue histidine 42 is the Proton acceptor of the active site. The tract at residues 113-137 (VPFHPGREDKPEPPPEGRLPDATKG) is disordered. Over residues 117–137 (PGREDKPEPPPEGRLPDATKG) the composition is skewed to basic and acidic residues. A heme b-binding site is contributed by histidine 163. The K(+) site is built by threonine 164, threonine 180, asparagine 182, isoleucine 185, and aspartate 187.

Belongs to the peroxidase family. Ascorbate peroxidase subfamily. The cofactor is heme b.

The protein resides in the cytoplasm. The catalysed reaction is L-ascorbate + H2O2 = L-dehydroascorbate + 2 H2O. Its function is as follows. Plays a key role in hydrogen peroxide removal. In Pisum sativum (Garden pea), this protein is L-ascorbate peroxidase, cytosolic (APX1).